Reading from the N-terminus, the 173-residue chain is GTP-dependent dephospho-CoA kinase (173 aa).

GTP contacts are provided by Asp-52, Val-53, Val-54, Asp-71, Lys-73, and Asp-122.

This sequence belongs to the GTP-dependent DPCK family.

The catalysed reaction is 3'-dephospho-CoA + GTP = GDP + CoA + H(+). Its pathway is cofactor biosynthesis; coenzyme A biosynthesis. In terms of biological role, catalyzes the GTP-dependent phosphorylation of the 3'-hydroxyl group of dephosphocoenzyme A to form coenzyme A (CoA). The chain is GTP-dependent dephospho-CoA kinase from Metallosphaera sedula (strain ATCC 51363 / DSM 5348 / JCM 9185 / NBRC 15509 / TH2).